The chain runs to 312 residues: Zinc-finger homeodomain protein 4 (312 aa).

Residues 20–74 are disordered; that stretch reads GGGGSHGHMIHHHDHHAANSAPPTHNNNNTTQPPPMPLHGNGHGNNYDHHHHQDP. Residues 37–50 are compositionally biased toward low complexity; that stretch reads ANSAPPTHNNNNTT. The segment at 90–139 adopts a ZF-HD dimerization-type; degenerate zinc-finger fold; sequence YKECLKNHAAAMGGNATDGCGEFMPSGEDGSIEALTCSACNCHRNFHRKE. A DNA-binding region (homeobox) is located at residues 218-281; that stretch reads KKRFRTKFTP…NNKIHFSKKN (64 aa).

Homo- and heterodimer with other ZFHD proteins. Interacts with ZHD1, ZHD2, ZHD5, ZHD7, ZHD8, ZHD10 and ZHD11. Mostly expressed in flowers and inflorescence.

The protein localises to the nucleus. In terms of biological role, putative transcription factor. Probably involved in the regulation of floral induction. The polypeptide is Zinc-finger homeodomain protein 4 (ZHD4) (Arabidopsis thaliana (Mouse-ear cress)).